Consider the following 238-residue polypeptide: C-type lectin domain family 4 member A (238 aa).

The Cytoplasmic segment spans residues 1–48 (MASEITYAEVKFKNESNSLHTYSESPAAPREKPIRDLRKPGSPSLLLT). The ITIM motif motif lies at 5 to 10 (ITYAEV). A helical; Signal-anchor for type II membrane protein membrane pass occupies residues 49–69 (SLMLLLLLLAITFLVAFIIYF). Residues 70–238 (QKYSQLLEEK…SVCQMKKINL (169 aa)) are Extracellular-facing. N91 carries an N-linked (GlcNAc...) asparagine glycan. C107 and C118 are disulfide-bonded. The C-type lectin domain maps to 126-233 (SSASWNKSEE…SLKQKSVCQM (108 aa)). 2 N-linked (GlcNAc...) asparagine glycosylation sites follow: N131 and N136. 2 disulfide bridges follow: C137–C231 and C205–C223. Positions 146, 152, 197, 199, and 203 each coordinate Ca(2+). Alpha-D-mannopyranose is bound by residues 197 to 199 (EPS) and E203. 209 to 211 (IYR) contacts N-acetyl-D-glucosamine. Ca(2+)-binding residues include N219 and D220.

May interact with PTPN6 via its ITIM site. As to expression, expressed in splenic antigen-presenting cells including B-cells, monocytes/macrophages, and dendritic cells (at protein level). Expressed in spleen and lymph node and slightly increased with dendritic cell maturation.

The protein resides in the cell membrane. In terms of biological role, may be involved in regulating immune reactivity. May play a role in modulating dendritic cells (DC) differentiation and/or maturation. May be involved in the inhibition of B-cell-receptor-mediated calcium mobilization and protein tyrosine phosphorylation. C-type lectin receptor that binds carbohydrates mannose and fucose but also weakly interacts with N-acetylglucosamine (GlcNAc) in a Ca(2+)-dependent manner. Involved in regulating immune reactivity. Once triggered by antigen, it is internalized by clathrin-dependent endocytosis and delivers its antigenic cargo into the antigen presentation pathway resulting in cross-priming of CD8(+) T cells. This cross-presentation and cross-priming are enhanced by TLR7 and TLR8 agonists with increased expansion of the CD8(+) T cells, high production of IFNG and TNF with reduced levels of IL4, IL5 and IL13. In plasmacytoid dendritic cells, inhibits TLR9-mediated IFNA and TNF production. May be involved via its ITIM motif (immunoreceptor tyrosine-based inhibitory motifs) in the inhibition of B-cell-receptor-mediated calcium mobilization and protein tyrosine phosphorylation. The polypeptide is C-type lectin domain family 4 member A (Clec4a) (Mus musculus (Mouse)).